Reading from the N-terminus, the 226-residue chain is Uracil-DNA glycosylase (226 aa).

Asp-68 serves as the catalytic Proton acceptor.

This sequence belongs to the uracil-DNA glycosylase (UDG) superfamily. UNG family.

It is found in the cytoplasm. The catalysed reaction is Hydrolyzes single-stranded DNA or mismatched double-stranded DNA and polynucleotides, releasing free uracil.. Excises uracil residues from the DNA which can arise as a result of misincorporation of dUMP residues by DNA polymerase or due to deamination of cytosine. The chain is Uracil-DNA glycosylase from Mycobacteroides abscessus (strain ATCC 19977 / DSM 44196 / CCUG 20993 / CIP 104536 / JCM 13569 / NCTC 13031 / TMC 1543 / L948) (Mycobacterium abscessus).